The chain runs to 354 residues: Cysteine and histidine-rich domain-containing protein morgana (354 aa).

Zn(2+) contacts are provided by C4, C9, C23, H26, C41, C42, C58, H63, C140, C145, C159, H162, C177, C178, C194, and H199. 2 CHORD domains span residues 4–63 (CYNR…LAKH) and 140–199 (CKNN…YGEH). The 92-residue stretch at 210–301 (VVQCRYDWHQ…LEPGSWSNLN (92 aa)) folds into the CS domain. Residues S324 and S339 each carry the phosphoserine modification.

Interacts with Hsp83.

The protein localises to the cytoplasm. The protein resides in the nucleus. It localises to the cytoskeleton. Its subcellular location is the spindle. Regulates centrosome duplication and mitotic spindle dynamics. Also involved in controlling the size of dendritic arbors. May act as co-chaperone for Hsp83. During mitotic spindle assembly, regulates microtubule (MT) dynamics by binding to MTs and promoting MT polymerisation. Promotes the elongation and retraction of terminal branches in response to changes in body size, possibly acting downstream of the TORC2 pathway to enable proportional scaling of dendritic arbors. The chain is Cysteine and histidine-rich domain-containing protein morgana from Drosophila melanogaster (Fruit fly).